The sequence spans 125 residues: Methylglyoxal synthase (125 aa).

One can recognise an MGS-like domain in the interval 1–125; it reads MTERLRIALI…TAEKLIKALD (125 aa). Residues histidine 12, lysine 16, 38-41, and 59-60 contribute to the substrate site; these read TGTT and SG. Aspartate 65 (proton donor/acceptor) is an active-site residue. Histidine 92 is a binding site for substrate.

The protein belongs to the methylglyoxal synthase family.

The catalysed reaction is dihydroxyacetone phosphate = methylglyoxal + phosphate. Functionally, catalyzes the formation of methylglyoxal from dihydroxyacetone phosphate. This chain is Methylglyoxal synthase, found in Brucella anthropi (strain ATCC 49188 / DSM 6882 / CCUG 24695 / JCM 21032 / LMG 3331 / NBRC 15819 / NCTC 12168 / Alc 37) (Ochrobactrum anthropi).